The chain runs to 436 residues: Gamma-glutamyl phosphate reductase (436 aa).

This sequence belongs to the gamma-glutamyl phosphate reductase family.

It localises to the cytoplasm. It catalyses the reaction L-glutamate 5-semialdehyde + phosphate + NADP(+) = L-glutamyl 5-phosphate + NADPH + H(+). It functions in the pathway amino-acid biosynthesis; L-proline biosynthesis; L-glutamate 5-semialdehyde from L-glutamate: step 2/2. Functionally, catalyzes the NADPH-dependent reduction of L-glutamate 5-phosphate into L-glutamate 5-semialdehyde and phosphate. The product spontaneously undergoes cyclization to form 1-pyrroline-5-carboxylate. The polypeptide is Gamma-glutamyl phosphate reductase (Prochlorococcus marinus (strain AS9601)).